The following is a 150-amino-acid chain: Transcriptional repressor NrdR (150 aa).

A zinc finger lies at 3 to 34; it reads CPFCQHDHSKVIDSRVIDAGSAIRRRRECSKC. Residues 46 to 136 form the ATP-cone domain; sequence LLVVKRNGVT…VYKSFDSADD (91 aa).

This sequence belongs to the NrdR family. Zn(2+) is required as a cofactor.

Functionally, negatively regulates transcription of bacterial ribonucleotide reductase nrd genes and operons by binding to NrdR-boxes. The polypeptide is Transcriptional repressor NrdR (Corynebacterium glutamicum (strain ATCC 13032 / DSM 20300 / JCM 1318 / BCRC 11384 / CCUG 27702 / LMG 3730 / NBRC 12168 / NCIMB 10025 / NRRL B-2784 / 534)).